We begin with the raw amino-acid sequence, 68 residues long: DNA gyrase inhibitor YacG (68 aa).

Cys10, Cys13, Cys29, and Cys33 together coordinate Zn(2+). The tract at residues 45–68 is disordered; the sequence is EKRIPSDTELSDSDEWSEEDPLKH. The span at 53–68 shows a compositional bias: acidic residues; it reads ELSDSDEWSEEDPLKH.

Belongs to the DNA gyrase inhibitor YacG family. Interacts with GyrB. Requires Zn(2+) as cofactor.

Inhibits all the catalytic activities of DNA gyrase by preventing its interaction with DNA. Acts by binding directly to the C-terminal domain of GyrB, which probably disrupts DNA binding by the gyrase. The protein is DNA gyrase inhibitor YacG of Yersinia pseudotuberculosis serotype O:1b (strain IP 31758).